A 77-amino-acid chain; its full sequence is U9-lycotoxin-Ls1a (77 aa).

An N-terminal signal peptide occupies residues 1–20 (MKLLLFTALVLVVIVSLIEA). The propeptide occupies 21-26 (EAENER).

The protein belongs to the neurotoxin 19 (CSTX) family. 08 (U8-Lctx) subfamily. Contains 4 disulfide bonds. As to expression, expressed by the venom gland.

The protein localises to the secreted. This is U9-lycotoxin-Ls1a from Lycosa singoriensis (Wolf spider).